The sequence spans 275 residues: Protein COFACTOR ASSEMBLY OF COMPLEX C SUBUNIT B CCB2, chloroplastic (275 aa).

The N-terminal 19 residues, 1–19 (MSIQICNFPFHPKFALQPR), are a transit peptide targeting the chloroplast. The Stromal portion of the chain corresponds to 20–65 (AQRSTRIFARTENDSPQSKTSDQQLNLSVLRFTFGIPGFDESYLPR). A helical membrane pass occupies residues 66 to 86 (WIGYGFGSLLLLNHFSASAPI). At 87 to 93 (SESQMRS) the chain is on the lumenal side. Residues 94-114 (EALGLSLAAFSIALPYIGKFL) form a helical membrane-spanning segment. The Stromal portion of the chain corresponds to 115–275 (KGSVVEQRSL…IGAMAEKFRG (161 aa)).

It localises to the plastid. It is found in the chloroplast thylakoid membrane. Functionally, required for the biogenesis and accumulation of native cytochrome b6 in the thylakoid membrane. Controls the conversion of apocytochrome b6 to holocytochrome b6. Required for covalent binding of the c-type heme to cytochrome b6. The protein is Protein COFACTOR ASSEMBLY OF COMPLEX C SUBUNIT B CCB2, chloroplastic of Arabidopsis thaliana (Mouse-ear cress).